The sequence spans 63 residues: Arabinogalactan protein 41 (63 aa).

A signal peptide spans 1-27 (MSGSRLFFGVSTIVSIIFAILLPMAHA). Residue glutamine 28 is modified to Pyrrolidone carboxylic acid. 4-hydroxyproline occurs at positions 32, 34, and 36. O-linked (Ara...) hydroxyproline glycans are attached at residues proline 32, proline 34, and proline 36. Residue serine 38 is the site of GPI-anchor amidated serine attachment. A propeptide spans 39 to 63 (DGTTIDQGIAYVLMLVALVLTYLIH) (removed in mature form).

It belongs to the AG-peptide AGP family. Post-translationally, contains 4-hydroxyproline; hydroxylated on Pro-32, Pro-34 and Pro-36. In terms of processing, O-glycosylated on hydroxyprolines; noncontiguous hydroxylproline residues are glycosylated with arabinogalactan.

Its subcellular location is the cell membrane. In terms of biological role, proteoglycan that seems to be implicated in diverse developmental roles such as differentiation, cell-cell recognition, embryogenesis and programmed cell death. In Arabidopsis thaliana (Mouse-ear cress), this protein is Arabinogalactan protein 41.